A 155-amino-acid polypeptide reads, in one-letter code: 3-dehydroquinate dehydratase (155 aa).

The Proton acceptor role is filled by tyrosine 31. Positions 83, 89, and 96 each coordinate substrate. Histidine 109 serves as the catalytic Proton donor. Residues 110 to 111 (LS) and arginine 120 each bind substrate.

This sequence belongs to the type-II 3-dehydroquinase family. In terms of assembly, homododecamer.

The enzyme catalyses 3-dehydroquinate = 3-dehydroshikimate + H2O. The protein operates within metabolic intermediate biosynthesis; chorismate biosynthesis; chorismate from D-erythrose 4-phosphate and phosphoenolpyruvate: step 3/7. Catalyzes a trans-dehydration via an enolate intermediate. The chain is 3-dehydroquinate dehydratase from Laribacter hongkongensis (strain HLHK9).